Reading from the N-terminus, the 341-residue chain is Phenylalanine--tRNA ligase alpha subunit (341 aa).

Glu254 provides a ligand contact to Mg(2+).

The protein belongs to the class-II aminoacyl-tRNA synthetase family. Phe-tRNA synthetase alpha subunit type 1 subfamily. Tetramer of two alpha and two beta subunits. Requires Mg(2+) as cofactor.

It localises to the cytoplasm. The catalysed reaction is tRNA(Phe) + L-phenylalanine + ATP = L-phenylalanyl-tRNA(Phe) + AMP + diphosphate + H(+). This chain is Phenylalanine--tRNA ligase alpha subunit, found in Chlorobaculum parvum (strain DSM 263 / NCIMB 8327) (Chlorobium vibrioforme subsp. thiosulfatophilum).